A 227-amino-acid chain; its full sequence is Cytochrome c oxidase subunit 2 (227 aa).

Residues 1–14 are Mitochondrial intermembrane-facing; that stretch reads MAYPFQLGLQDATS. A helical transmembrane segment spans residues 15–45; the sequence is PIMEELTNFHDHTLMIVFLISSLVLYIISSM. The Mitochondrial matrix portion of the chain corresponds to 46-59; that stretch reads LATKMTHTSTMDAQ. Residues 60–87 traverse the membrane as a helical segment; the sequence is SMETIWTILPAVILVLIALPSLRILYMM. Topologically, residues 88 to 227 are mitochondrial intermembrane; it reads DEINNPVLTV…FFENWSASMI (140 aa). Positions 161, 196, 198, 200, 204, and 207 each coordinate Cu cation. E198 provides a ligand contact to Mg(2+).

It belongs to the cytochrome c oxidase subunit 2 family. As to quaternary structure, component of the cytochrome c oxidase (complex IV, CIV), a multisubunit enzyme composed of 14 subunits. The complex is composed of a catalytic core of 3 subunits MT-CO1, MT-CO2 and MT-CO3, encoded in the mitochondrial DNA, and 11 supernumerary subunits COX4I, COX5A, COX5B, COX6A, COX6B, COX6C, COX7A, COX7B, COX7C, COX8 and NDUFA4, which are encoded in the nuclear genome. The complex exists as a monomer or a dimer and forms supercomplexes (SCs) in the inner mitochondrial membrane with NADH-ubiquinone oxidoreductase (complex I, CI) and ubiquinol-cytochrome c oxidoreductase (cytochrome b-c1 complex, complex III, CIII), resulting in different assemblies (supercomplex SCI(1)III(2)IV(1) and megacomplex MCI(2)III(2)IV(2)). Found in a complex with TMEM177, COA6, COX18, COX20, SCO1 and SCO2. Interacts with TMEM177 in a COX20-dependent manner. Interacts with COX20. Interacts with COX16. The cofactor is Cu cation.

The protein localises to the mitochondrion inner membrane. It carries out the reaction 4 Fe(II)-[cytochrome c] + O2 + 8 H(+)(in) = 4 Fe(III)-[cytochrome c] + 2 H2O + 4 H(+)(out). Component of the cytochrome c oxidase, the last enzyme in the mitochondrial electron transport chain which drives oxidative phosphorylation. The respiratory chain contains 3 multisubunit complexes succinate dehydrogenase (complex II, CII), ubiquinol-cytochrome c oxidoreductase (cytochrome b-c1 complex, complex III, CIII) and cytochrome c oxidase (complex IV, CIV), that cooperate to transfer electrons derived from NADH and succinate to molecular oxygen, creating an electrochemical gradient over the inner membrane that drives transmembrane transport and the ATP synthase. Cytochrome c oxidase is the component of the respiratory chain that catalyzes the reduction of oxygen to water. Electrons originating from reduced cytochrome c in the intermembrane space (IMS) are transferred via the dinuclear copper A center (CU(A)) of subunit 2 and heme A of subunit 1 to the active site in subunit 1, a binuclear center (BNC) formed by heme A3 and copper B (CU(B)). The BNC reduces molecular oxygen to 2 water molecules using 4 electrons from cytochrome c in the IMS and 4 protons from the mitochondrial matrix. This chain is Cytochrome c oxidase subunit 2 (MT-CO2), found in Acomys wilsoni (Wilson's spiny mouse).